We begin with the raw amino-acid sequence, 307 residues long: NAD kinase (307 aa).

The active-site Proton acceptor is the aspartate 85. NAD(+)-binding positions include 85 to 86 (DG), arginine 90, 159 to 160 (NE), aspartate 189, and 200 to 205 (TAYAFS).

The protein belongs to the NAD kinase family. A divalent metal cation serves as cofactor.

The protein localises to the cytoplasm. It carries out the reaction NAD(+) + ATP = ADP + NADP(+) + H(+). In terms of biological role, involved in the regulation of the intracellular balance of NAD and NADP, and is a key enzyme in the biosynthesis of NADP. Catalyzes specifically the phosphorylation on 2'-hydroxyl of the adenosine moiety of NAD to yield NADP. This Mycobacterium bovis (strain ATCC BAA-935 / AF2122/97) protein is NAD kinase.